The sequence spans 280 residues: Polyamine aminopropyltransferase (280 aa).

A PABS domain is found at 2–235 (GGWIDEEHRG…GWWSWTFAAV (234 aa)). An S-methyl-5'-thioadenosine-binding site is contributed by Gln29. Spermidine-binding residues include His60 and Asp84. Residues Glu104 and 136 to 137 (DG) contribute to the S-methyl-5'-thioadenosine site. The Proton acceptor role is filled by Asp155. Position 162 (Pro162) interacts with S-methyl-5'-thioadenosine.

It belongs to the spermidine/spermine synthase family. In terms of assembly, homodimer or homotetramer.

The protein localises to the cytoplasm. The enzyme catalyses S-adenosyl 3-(methylsulfanyl)propylamine + putrescine = S-methyl-5'-thioadenosine + spermidine + H(+). It functions in the pathway amine and polyamine biosynthesis; spermidine biosynthesis; spermidine from putrescine: step 1/1. Its function is as follows. Catalyzes the irreversible transfer of a propylamine group from the amino donor S-adenosylmethioninamine (decarboxy-AdoMet) to putrescine (1,4-diaminobutane) to yield spermidine. The sequence is that of Polyamine aminopropyltransferase from Parasynechococcus marenigrum (strain WH8102).